Consider the following 203-residue polypeptide: Urease accessory protein UreG (203 aa).

Residue 10–17 participates in GTP binding; it reads GPVGAGKT.

This sequence belongs to the SIMIBI class G3E GTPase family. UreG subfamily. In terms of assembly, homodimer. UreD, UreF and UreG form a complex that acts as a GTP-hydrolysis-dependent molecular chaperone, activating the urease apoprotein by helping to assemble the nickel containing metallocenter of UreC. The UreE protein probably delivers the nickel.

It localises to the cytoplasm. Functionally, facilitates the functional incorporation of the urease nickel metallocenter. This process requires GTP hydrolysis, probably effectuated by UreG. The protein is Urease accessory protein UreG of Kocuria rhizophila (strain ATCC 9341 / DSM 348 / NBRC 103217 / DC2201).